A 340-amino-acid polypeptide reads, in one-letter code: Centromere protein N (340 aa).

2 positions are modified to phosphoserine: Ser-227 and Ser-236.

Belongs to the CENP-N/CHL4 family. As to quaternary structure, component of the CENPA-NAC complex, at least composed of CENPA, CENPC, CENPH, CENPM, CENPN, CENPT and CENPU. The CENPA-NAC complex interacts with the CENPA-CAD complex, composed of CENPI, CENPK, CENPL, CENPO, CENPP, CENPQ, CENPR and CENPS. Interacts directly with CENPA. Identified in a centromere complex containing histones H2A, H2B and H4, and at least CENPA, CENPB, CENPC, CENPT, CENPN, HJURP, SUPT16H, SSRP1 and RSF1.

The protein localises to the nucleus. It is found in the chromosome. It localises to the centromere. Its subcellular location is the kinetochore. Functionally, component of the CENPA-NAC (nucleosome-associated) complex, a complex that plays a central role in assembly of kinetochore proteins, mitotic progression and chromosome segregation. The CENPA-NAC complex recruits the CENPA-CAD (nucleosome distal) complex and may be involved in incorporation of newly synthesized CENPA into centromeres. CENPN is the first protein to bind specifically to CENPA nucleosomes and the direct binding of CENPA nucleosomes by CENPN is required for centromere assembly. Required for chromosome congression and efficiently align the chromosomes on a metaphase plate. The sequence is that of Centromere protein N (Cenpn) from Rattus norvegicus (Rat).